Here is a 241-residue protein sequence, read N- to C-terminus: MSLTLLPAVDVRDGKAVRLRQGESGSETDYGSPFEAARTWVEAGAEWIHLVDLDAAFGTGNNRDQLREIVHELGDRVNIELSGGVRDDASLDAALEAGAARVNIGTAALENPDWTASVIKKYGDRVAVGLDVRGHTLAARGWTREGGDLFETMKFLDSVGCLRYVVTDVAKDGMMSGPNIQLLSEVAERTDAKVTASGGISKLDDLRAIKELAEIGVDSAILGKSLYARAFTLQEALEVAK.

Residue Asp10 is the Proton acceptor of the active site. Asp131 functions as the Proton donor in the catalytic mechanism.

It belongs to the HisA/HisF family.

The protein resides in the cytoplasm. It carries out the reaction 1-(5-phospho-beta-D-ribosyl)-5-[(5-phospho-beta-D-ribosylamino)methylideneamino]imidazole-4-carboxamide = 5-[(5-phospho-1-deoxy-D-ribulos-1-ylimino)methylamino]-1-(5-phospho-beta-D-ribosyl)imidazole-4-carboxamide. Its pathway is amino-acid biosynthesis; L-histidine biosynthesis; L-histidine from 5-phospho-alpha-D-ribose 1-diphosphate: step 4/9. The protein is 1-(5-phosphoribosyl)-5-[(5-phosphoribosylamino)methylideneamino] imidazole-4-carboxamide isomerase of Bifidobacterium longum (strain DJO10A).